Consider the following 649-residue polypeptide: WEB family protein At5g55860 (649 aa).

Coiled coils occupy residues 59-227 (EKVL…ACSQ), 267-356 (EFAK…IESV), and 391-461 (TINQ…MSEK). Over residues 443-453 (EAKAAETKALE) the composition is skewed to basic and acidic residues. The disordered stretch occupies residues 443–483 (EAKAAETKALEQIKSMSEKTNAARNSTSSESGSQSITLSQE). Over residues 456 to 467 (KSMSEKTNAARN) the composition is skewed to polar residues. A compositionally biased stretch (low complexity) spans 468 to 482 (STSSESGSQSITLSQ). Residues 505-549 (AALAQVEAVRASENETLKKLETTQEEIKKLKTATEEALKKAAMAD) are a coiled coil. Residues 583 to 611 (MKMASESSPQQHYKAPKQKPVNNKLEKTK) are disordered.

It belongs to the WEB family.

The sequence is that of WEB family protein At5g55860 from Arabidopsis thaliana (Mouse-ear cress).